Here is a 22-residue protein sequence, read N- to C-terminus: NADH dehydrogenase [ubiquinone] 1 alpha subcomplex subunit 9 (22 aa).

Positions 1–22 are disordered; it reads ASNLATGGAGPLIXKGTGGRSS.

This sequence belongs to the complex I NDUFA9 subunit family. As to quaternary structure, complex I is composed of about 45 different subunits. The cofactor is FAD.

The protein localises to the mitochondrion matrix. In terms of biological role, accessory subunit of the mitochondrial membrane respiratory chain NADH dehydrogenase (Complex I), that is believed not to be involved in catalysis. Complex I functions in the transfer of electrons from NADH to the respiratory chain. The immediate electron acceptor for the enzyme is believed to be ubiquinone. The sequence is that of NADH dehydrogenase [ubiquinone] 1 alpha subcomplex subunit 9 from Solanum tuberosum (Potato).